Reading from the N-terminus, the 302-residue chain is Sulfate adenylyltransferase subunit 2 (302 aa).

Belongs to the PAPS reductase family. CysD subfamily. Heterodimer composed of CysD, the smaller subunit, and CysN.

The catalysed reaction is sulfate + ATP + H(+) = adenosine 5'-phosphosulfate + diphosphate. The protein operates within sulfur metabolism; hydrogen sulfide biosynthesis; sulfite from sulfate: step 1/3. With CysN forms the ATP sulfurylase (ATPS) that catalyzes the adenylation of sulfate producing adenosine 5'-phosphosulfate (APS) and diphosphate, the first enzymatic step in sulfur assimilation pathway. APS synthesis involves the formation of a high-energy phosphoric-sulfuric acid anhydride bond driven by GTP hydrolysis by CysN coupled to ATP hydrolysis by CysD. The polypeptide is Sulfate adenylyltransferase subunit 2 (Buchnera aphidicola subsp. Acyrthosiphon pisum (strain 5A)).